The sequence spans 307 residues: Transcriptional repressor scratch 2 (307 aa).

The tract at residues 1 to 20 (MPRSFLVKKIKGDGFQCSGV) is SNAG domain. Disordered stretches follow at residues 34–90 (LPGA…PQSS) and 116–148 (GRSRRRRGGGGGDAGGSGDAGGAGGRAGRAGAQ). Residues 124–148 (GGGGDAGGSGDAGGAGGRAGRAGAQ) show a composition bias toward gly residues. C2H2-type zinc fingers lie at residues 155–177 (HACAECGKTYATSSNLSRHKQTH), 186–208 (RKCPTCGKAYVSMPALAMHLLTH), 212–234 (HKCGVCGKAFSRPWLLQGHMRSH), and 240–262 (FGCAHCGKAFADRSNLRAHMQTH). The segment at 268 to 291 (YRCRQCDKSFALKSYLHKHCEAAC) adopts a C2H2-type 5; atypical zinc-finger fold.

This sequence belongs to the snail C2H2-type zinc-finger protein family.

The protein resides in the nucleus. In terms of biological role, may be involved in transcriptional regulation. This Homo sapiens (Human) protein is Transcriptional repressor scratch 2 (SCRT2).